The sequence spans 299 residues: Sulfate adenylyltransferase subunit 2 (299 aa).

It belongs to the PAPS reductase family. CysD subfamily. Sulfate-activating enzymes, NodP and NodQ, may be physically associated.

It carries out the reaction sulfate + ATP + H(+) = adenosine 5'-phosphosulfate + diphosphate. Functionally, proposed to provide activated sulfate for transfer to nod factor. The protein is Sulfate adenylyltransferase subunit 2 (nodP) of Rhizobium sp. (strain BR816).